The primary structure comprises 81 residues: Large ribosomal subunit protein bL31B (81 aa).

It belongs to the bacterial ribosomal protein bL31 family. Type B subfamily. As to quaternary structure, part of the 50S ribosomal subunit.

The polypeptide is Large ribosomal subunit protein bL31B (Limosilactobacillus fermentum (strain NBRC 3956 / LMG 18251) (Lactobacillus fermentum)).